A 388-amino-acid polypeptide reads, in one-letter code: tRNA (guanine-N(7)-)-methyltransferase non-catalytic subunit (388 aa).

WD repeat units lie at residues 58–102, 112–151, 153–194, and 196–234; these read VEKR…KGDI, VVPKAPTAIVFDKEDAYVVVGDRAGDVHRFSVLNGSAIEM, GAIS…DSFF, and GHTEYVKTLAVQDNDSLWSSGGDKNLYNWSIAKCSAPRR. Residues 365–388 form a disordered region; that stretch reads EKKKRRLNEDINGDDGEGPGPSNS.

This sequence belongs to the WD repeat TRM82 family. As to quaternary structure, forms a heterodimer with the catalytic subunit.

The protein localises to the nucleus. The protein operates within tRNA modification; N(7)-methylguanine-tRNA biosynthesis. Required for the formation of N(7)-methylguanine at position 46 (m7G46) in tRNA. In the complex, it is required to stabilize and induce conformational changes of the catalytic subunit. The polypeptide is tRNA (guanine-N(7)-)-methyltransferase non-catalytic subunit (Caenorhabditis elegans).